A 137-amino-acid chain; its full sequence is Large ribosomal subunit protein uL16 (137 aa).

Over residues M1–N17 the composition is skewed to basic residues. A disordered region spans residues M1–G24.

This sequence belongs to the universal ribosomal protein uL16 family. Part of the 50S ribosomal subunit.

Its function is as follows. Binds 23S rRNA and is also seen to make contacts with the A and possibly P site tRNAs. In Dichelobacter nodosus (strain VCS1703A), this protein is Large ribosomal subunit protein uL16.